Here is a 153-residue protein sequence, read N- to C-terminus: 3-hydroxyacyl-[acyl-carrier-protein] dehydratase FabZ (153 aa).

The active site involves H57.

This sequence belongs to the thioester dehydratase family. FabZ subfamily.

The protein localises to the cytoplasm. It catalyses the reaction a (3R)-hydroxyacyl-[ACP] = a (2E)-enoyl-[ACP] + H2O. Functionally, involved in unsaturated fatty acids biosynthesis. Catalyzes the dehydration of short chain beta-hydroxyacyl-ACPs and long chain saturated and unsaturated beta-hydroxyacyl-ACPs. The chain is 3-hydroxyacyl-[acyl-carrier-protein] dehydratase FabZ from Aeromonas salmonicida (strain A449).